The primary structure comprises 155 residues: Ribosome maturation factor RimP (155 aa).

It belongs to the RimP family.

Its subcellular location is the cytoplasm. Required for maturation of 30S ribosomal subunits. This Staphylococcus carnosus (strain TM300) protein is Ribosome maturation factor RimP.